A 445-amino-acid polypeptide reads, in one-letter code: tRNA-2-methylthio-N(6)-dimethylallyladenosine synthase (445 aa).

An MTTase N-terminal domain is found at 2–122; it reads KKAFVKSYGC…LPDLLARSRE (121 aa). Positions 11, 47, 85, 157, 161, and 164 each coordinate [4Fe-4S] cluster. One can recognise a Radical SAM core domain in the interval 143–378; the sequence is RTLGASAFLT…LDSQRHAYQR (236 aa). The 63-residue stretch at 378–440 folds into the TRAM domain; sequence RAAAGRVFDV…SNSLFGELVS (63 aa).

The protein belongs to the methylthiotransferase family. MiaB subfamily. In terms of assembly, monomer. The cofactor is [4Fe-4S] cluster.

Its subcellular location is the cytoplasm. The catalysed reaction is N(6)-dimethylallyladenosine(37) in tRNA + (sulfur carrier)-SH + AH2 + 2 S-adenosyl-L-methionine = 2-methylsulfanyl-N(6)-dimethylallyladenosine(37) in tRNA + (sulfur carrier)-H + 5'-deoxyadenosine + L-methionine + A + S-adenosyl-L-homocysteine + 2 H(+). Catalyzes the methylthiolation of N6-(dimethylallyl)adenosine (i(6)A), leading to the formation of 2-methylthio-N6-(dimethylallyl)adenosine (ms(2)i(6)A) at position 37 in tRNAs that read codons beginning with uridine. This is tRNA-2-methylthio-N(6)-dimethylallyladenosine synthase from Methylobacterium radiotolerans (strain ATCC 27329 / DSM 1819 / JCM 2831 / NBRC 15690 / NCIMB 10815 / 0-1).